A 652-amino-acid polypeptide reads, in one-letter code: Na(+)/H(+) antiporter NhaA 1 (652 aa).

The na(+)/H(+) antiporter NhaA stretch occupies residues Met-1–Val-427. 11 helical membrane-spanning segments follow: residues Ala-27–Leu-47, Leu-78–Val-98, Thr-114–Phe-134, Val-142–Leu-162, Phe-173–Tyr-193, Thr-200–Gly-220, Leu-227–Val-247, Leu-312–Ala-332, Val-343–Ala-363, Trp-376–Ile-396, and Ile-411–Ala-431. Positions Phe-428–Ala-623 constitute a Thioredoxin domain. A disordered region spans residues Arg-626–Thr-652. Basic and acidic residues predominate over residues Arg-628–Gly-642.

It in the N-terminal section; belongs to the NhaA Na(+)/H(+) (TC 2.A.33) antiporter family.

It is found in the cell membrane. It catalyses the reaction Na(+)(in) + 2 H(+)(out) = Na(+)(out) + 2 H(+)(in). Functionally, na(+)/H(+) antiporter that extrudes sodium in exchange for external protons. The chain is Na(+)/H(+) antiporter NhaA 1 from Salinispora arenicola (strain CNS-205).